A 282-amino-acid polypeptide reads, in one-letter code: Putative 4-diphosphocytidyl-2-C-methyl-D-erythritol kinase (282 aa).

Lys-9 is a catalytic residue. 93–103 (PVSAGLAGGSA) lines the ATP pocket. The active site involves Asp-135.

Belongs to the GHMP kinase family. IspE subfamily.

It catalyses the reaction 4-CDP-2-C-methyl-D-erythritol + ATP = 4-CDP-2-C-methyl-D-erythritol 2-phosphate + ADP + H(+). Catalyzes the phosphorylation of the position 2 hydroxy group of 4-diphosphocytidyl-2C-methyl-D-erythritol. This Staphylococcus aureus (strain MSSA476) protein is Putative 4-diphosphocytidyl-2-C-methyl-D-erythritol kinase.